Consider the following 987-residue polypeptide: Nuclear matrix constituent protein 1b (987 aa).

The interval 1–25 is disordered; it reads MASPRSAGGVGGGGGGGGGSGGAAA. Residues 8–24 show a composition bias toward gly residues; sequence GGVGGGGGGGGGSGGAA. Coiled-coil stretches lie at residues 403-545 and 594-717; these read LAEL…ERRA and LSKI…DREA. 2 stretches are compositionally biased toward basic and acidic residues: residues 752–764 and 898–908; these read SDIN…HDNS and CKEHEYGDKGP. Disordered regions lie at residues 752–775 and 887–987; these read SDIN…FGRK and HDEA…FLIT. Over residues 944–954 the composition is skewed to polar residues; sequence ATVSATETSNV. The segment covering 956–973 has biased composition (acidic residues); that stretch reads GPEDNNDSDEEDEEEEEE.

Belongs to the CRWN family. In terms of assembly, interacts with SWI3C.

Its subcellular location is the nucleus matrix. The protein resides in the nucleus lamina. In terms of biological role, architectural component of nuclear structure that plays different roles in controlling nuclear size and morphology. Involved in the modification of chromatin accessibility by interacting with SWI3C, a component of the chromatin-remodeling complex, to thus reduce the suppression effect of the complex. Acts as positive regulator of drought resistance and modulates root growth. Positively regulates the expression of genes related to root growth and drought resistance. The polypeptide is Nuclear matrix constituent protein 1b (Oryza sativa subsp. japonica (Rice)).